The primary structure comprises 150 residues: Probable cyclic pyranopterin monophosphate synthase (150 aa).

Substrate is bound by residues 68 to 70 (YCH) and 104 to 105 (ME). Residue D119 is part of the active site.

It belongs to the MoaC family. Homohexamer; trimer of dimers.

The catalysed reaction is (8S)-3',8-cyclo-7,8-dihydroguanosine 5'-triphosphate = cyclic pyranopterin phosphate + diphosphate. It functions in the pathway cofactor biosynthesis; molybdopterin biosynthesis. Catalyzes the conversion of (8S)-3',8-cyclo-7,8-dihydroguanosine 5'-triphosphate to cyclic pyranopterin monophosphate (cPMP). The protein is Probable cyclic pyranopterin monophosphate synthase of Thermoplasma volcanium (strain ATCC 51530 / DSM 4299 / JCM 9571 / NBRC 15438 / GSS1).